The sequence spans 165 residues: Protein SprT (165 aa).

One can recognise a SprT-like domain in the interval Glu-20–Leu-162. His-78 provides a ligand contact to Zn(2+). Residue Glu-79 is part of the active site. Residue His-82 participates in Zn(2+) binding.

The protein belongs to the SprT family. Requires Zn(2+) as cofactor.

The protein resides in the cytoplasm. The polypeptide is Protein SprT (Escherichia coli (strain SMS-3-5 / SECEC)).